Here is a 572-residue protein sequence, read N- to C-terminus: uncharacterized protein (572 aa).

Residues 13–45 (ALIAKPKGKTVSGDGADPKKRGRPKKNATEPAV) are disordered. Residues 177–204 (VLTKEMEEKLEALDRDMRTAEETKVSIA) adopt a coiled-coil conformation.

This is an uncharacterized protein from Dryophytes versicolor (chameleon treefrog).